We begin with the raw amino-acid sequence, 518 residues long: Protein translocase subunit SecD (518 aa).

Transmembrane regions (helical) follow at residues 9–29, 361–381, 384–404, 406–426, 452–474, and 486–506; these read IFLS…NFMQ, LIGF…LGLF, IALS…QATL, LPGI…NVLI, FATI…IFGV, and IGII…IDIW.

Belongs to the SecD/SecF family. SecD subfamily. In terms of assembly, forms a complex with SecF. Part of the essential Sec protein translocation apparatus which comprises SecA, SecYEG and auxiliary proteins SecDF-YajC and YidC.

The protein resides in the cell inner membrane. Functionally, part of the Sec protein translocase complex. Interacts with the SecYEG preprotein conducting channel. SecDF uses the proton motive force (PMF) to complete protein translocation after the ATP-dependent function of SecA. The sequence is that of Protein translocase subunit SecD from Rickettsia conorii (strain ATCC VR-613 / Malish 7).